The chain runs to 565 residues: MEDSDSAAKQLGLAEAAAVAAAAAVAAAAAAAAESEAEEPVLSRDEDSEEDADSEAERETRRVTAVAVMAAESGHMDMGTEALPSPDEAAAAAAFAEVTTVTVANVGSSADNVFTTSVANAASISGHVLSGRTALQIGDSLNTEKATLIVVHTDGSIVETTGLKGPAAPLTPGPQSPPTPLAPGQEKGGTKYNWDPSVYDSELPVRCRNISGTLYKSRLGSGGRGRCIKQGENWYSPTEFEAMAGRASSKDWKRSIRYAGRPLQCLIQDGILNPHAASCTCAACCDDMTLSGPVRLFVPYKRRKKENELPTTPVKKDSPKNITLLPATAATTFTVTPSGQITTSGALTFDRASTVEATAVISESPAQGDVFAGATVQEAGVQPPCRVGHPEPHYPGYQDSCQIAPFPEAALPTSHPKIVLTSLPALAVPPSTPTKAVSPTVVSGLEMSEHRSWLYLEEMVNSLLNTAQQLKTLFEQAKQASSCREAAVTQARMQVDAERKEQSCVNCGREAMSECTGCHKVNYCSTFCQRKDWKDHQHVCGQSASVTVQADDVHVEESVIEKVAV.

Disordered regions lie at residues 29–62 (AAAA…ETRR) and 162–189 (GLKG…EKGG). Over residues 169–181 (PLTPGPQSPPTPL) the composition is skewed to pro residues. Thr171 is modified (phosphothreonine). Phosphoserine is present on Ser176. Phosphothreonine is present on Thr179. In terms of domain architecture, SAND spans 193–273 (NWDPSVYDSE…QCLIQDGILN (81 aa)). The Nuclear localization signal signature appears at 301–316 (KRRKKENELPTTPVKK). Positions 403-478 (IAPFPEAALP…QLKTLFEQAK (76 aa)) are interaction with LMO4. Thr432 is modified (phosphothreonine). Ser443 and Ser448 each carry phosphoserine. Zn(2+) contacts are provided by Cys504, Cys507, Cys515, Cys518, Cys524, Cys528, His536, and Cys540. The segment at 504–540 (CVNCGREAMSECTGCHKVNYCSTFCQRKDWKDHQHVC) adopts an MYND-type zinc-finger fold.

Homodimer. Interacts with LMO4; LMO4 blocks export from nucleus. Interacts with LMO2 and CLIM2. May interact with the corepressors NCOR1 and NCRO2. Identified in a complex with XRCC5 and XRCC6. Interacts (via the SAND domain) with the DNA-PK complex subunit XRCC6; the interaction is direct and may be inhibited by DNA-binding. May be phosphorylated by DNA-PK complex in a DNA independent manner (in vitro). As to expression, ubiquitous. Detected in brain, spleen, adrenal, lung, skeletal muscle, liver, kidney, and in developing germ cells in testis. In pituitary, restricted to hormone-secreting cell types.

It is found in the nucleus. The protein localises to the secreted. Functionally, transcription factor that binds to sequence with multiple copies of 5'-TTC[CG]G-3' present in its own promoter and that of the HNRPA2B1 gene. Down-regulates transcription of these genes. Binds to the retinoic acid response element (RARE) 5'-AGGGTTCACCGAAAGTTCA-3'. Activates the proenkephalin gene independently of promoter binding, probably through protein-protein interaction. When secreted, behaves as an inhibitor of cell proliferation, by arresting cells in the G0 or G1 phase. Regulates epithelial cell proliferation and side-branching in the mammary gland. Required for neural tube closure and skeletal patterning. Controls the expression of peripheral tissue antigens in pancreatic lymph nodes. Transcriptional activator of EIF4G3. May also involved in behavior. This is Deformed epidermal autoregulatory factor 1 homolog (Deaf1) from Rattus norvegicus (Rat).